The primary structure comprises 922 residues: Lysine-specific demethylase 4 (922 aa).

The span at 1-15 (MASAATTTHFPSSRI) shows a compositional bias: polar residues. 2 disordered regions span residues 1 to 21 (MASA…EPCA) and 42 to 61 (SSSC…MFTD). A JmjN domain is found at 87 to 130 (VLTFYPTMREFKNFSQYIKKIEQNGGHLKAGIAKIVAPEGWTPR). Tyrosine 213 provides a ligand contact to 2-oxoglutarate. Residues 223-388 (DAQVEEWNMN…YGKDAVLCDC (166 aa)) form the JmjC domain. Fe cation-binding residues include histidine 265 and glutamate 267. The 2-oxoglutarate site is built by asparagine 275 and lysine 283. Residues cysteine 314 and histidine 320 each contribute to the Zn(2+) site. 2-oxoglutarate is bound at residue lysine 321. Histidine 356 is a Fe cation binding site. Zn(2+)-binding residues include cysteine 386 and cysteine 388. The tract at residues 435 to 475 (KRRQSLADASKIAKRARLGASSTATDSDGSSGSSGSEEATE) is disordered. Residues 453-475 (GASSTATDSDGSSGSSGSEEATE) show a composition bias toward low complexity. Residues 639–675 (TTSCQLCELRGGALIPCQIGTDSTWAHVACALFNRRA) form a C2HC pre-PHD-type zinc finger. Residues 723–783 (WECVVCHRTD…GVVMICHKHE (61 aa)) form a PHD-type; degenerate zinc finger.

This sequence belongs to the JHDM3 histone demethylase family. It depends on Fe(2+) as a cofactor.

It localises to the nucleus. The enzyme catalyses N(6),N(6),N(6)-trimethyl-L-lysyl(9)-[histone H3] + 2 2-oxoglutarate + 2 O2 = N(6)-methyl-L-lysyl(9)-[histone H3] + 2 formaldehyde + 2 succinate + 2 CO2. It catalyses the reaction N(6),N(6),N(6)-trimethyl-L-lysyl(36)-[histone H3] + 2 2-oxoglutarate + 2 O2 = N(6)-methyl-L-lysyl(36)-[histone H3] + 2 formaldehyde + 2 succinate + 2 CO2. In terms of biological role, histone demethylase that specifically demethylates 'Lys-9' and 'Lys-36' residues of histone H3, thereby playing a central role in histone code. Demethylation of Lys residue generates formaldehyde and succinate. Involved in the negative regulation of lifespan in a germline-dependent fashion. This is Lysine-specific demethylase 4 (jmjd-2) from Caenorhabditis elegans.